A 577-amino-acid polypeptide reads, in one-letter code: Serine/threonine-protein kinase AGC1-5 (577 aa).

A compositionally biased stretch (polar residues) spans 1–12; that stretch reads MDLASKKNTANV. Residues 1–151 form a disordered region; it reads MDLASKKNTA…DYAYGDNLVG (151 aa). Residues 44–55 are compositionally biased toward basic and acidic residues; sequence PHFDPKKMDPLV. 2 stretches are compositionally biased toward polar residues: residues 69–87 and 110–120; these read TRGT…SSDG and LTTSETYSPSA. Positions 185–509 constitute a Protein kinase domain; sequence FRLLKRLGYG…ATEIKQHPFF (325 aa). ATP-binding positions include 191-199 and Lys-214; that span reads LGYGDIGSV. Catalysis depends on Asp-310, which acts as the Proton acceptor. Positions 510–577 constitute an AGC-kinase C-terminal domain; it reads EGVNWALVRS…DTAYIDFEYF (68 aa).

The protein belongs to the protein kinase superfamily. AGC Ser/Thr protein kinase family. As to quaternary structure, interacts with PDPK1/PDK1. Post-translationally, autophosphorylated and phosphorylated by PDPK1/PDK1. Specifically expressed in pollen grains.

The catalysed reaction is L-seryl-[protein] + ATP = O-phospho-L-seryl-[protein] + ADP + H(+). It carries out the reaction L-threonyl-[protein] + ATP = O-phospho-L-threonyl-[protein] + ADP + H(+). Its activity is regulated as follows. Activated by PDPK1/PDK1. In terms of biological role, functions redudantly with AGC1-7 as signaling component in the pollen tube. Required for polarized growth of pollen tubes. The protein is Serine/threonine-protein kinase AGC1-5 of Arabidopsis thaliana (Mouse-ear cress).